The primary structure comprises 102 residues: Small ribosomal subunit protein uS10 (102 aa).

The protein belongs to the universal ribosomal protein uS10 family. Part of the 30S ribosomal subunit.

In terms of biological role, involved in the binding of tRNA to the ribosomes. This chain is Small ribosomal subunit protein uS10, found in Pseudothermotoga lettingae (strain ATCC BAA-301 / DSM 14385 / NBRC 107922 / TMO) (Thermotoga lettingae).